Reading from the N-terminus, the 285-residue chain is MRLIIVSGRSGSGKSTALNVLEDNGFYCIDNLPAGLLPELAERALIHTELAQPLVAVSIDARNLPSHLERFPQLLEEVRAKHIHCDVLYLDADEETLLKRFSETRRRHPLSSPHRSLAEAIEDETKLLGPIIDLADLKINTTSLNLYQLRDAIKLRLLNQPEPGTAFLVESFGFKRGMPVDADLVFDVRCLPNPYWKPELRDQSGLDQPVADYLAAQPDVEEMFQDISSYLLKWLPRFAASNRAYVTIAIGCTGGHHRSVYLTERLGQVLQKTLKNVQVRHRDLS.

8–15 contributes to the ATP binding site; sequence GRSGSGKS. Residue 60 to 63 participates in GTP binding; that stretch reads DARN.

This sequence belongs to the RapZ-like family.

In terms of biological role, displays ATPase and GTPase activities. In Pseudomonas fluorescens (strain SBW25), this protein is Nucleotide-binding protein PFLU_0879.